A 547-amino-acid chain; its full sequence is CTP synthase (547 aa).

The interval M1–L269 is amidoligase domain. Residue S14 participates in CTP binding. S14 contributes to the UTP binding site. ATP-binding positions include S15 to L20 and D72. Residues D72 and E143 each coordinate Mg(2+). CTP contacts are provided by residues D150–E152, K190–Q195, and K226. UTP-binding positions include K190–Q195 and K226. A Glutamine amidotransferase type-1 domain is found at T294–V547. G356 contacts L-glutamine. C383 serves as the catalytic Nucleophile; for glutamine hydrolysis. L-glutamine contacts are provided by residues L384–Q387, E407, and R475. Catalysis depends on residues H520 and E522.

Belongs to the CTP synthase family. As to quaternary structure, homotetramer.

It catalyses the reaction UTP + L-glutamine + ATP + H2O = CTP + L-glutamate + ADP + phosphate + 2 H(+). The enzyme catalyses L-glutamine + H2O = L-glutamate + NH4(+). It carries out the reaction UTP + NH4(+) + ATP = CTP + ADP + phosphate + 2 H(+). It participates in pyrimidine metabolism; CTP biosynthesis via de novo pathway; CTP from UDP: step 2/2. With respect to regulation, allosterically activated by GTP, when glutamine is the substrate; GTP has no effect on the reaction when ammonia is the substrate. The allosteric effector GTP functions by stabilizing the protein conformation that binds the tetrahedral intermediate(s) formed during glutamine hydrolysis. Inhibited by the product CTP, via allosteric rather than competitive inhibition. Functionally, catalyzes the ATP-dependent amination of UTP to CTP with either L-glutamine or ammonia as the source of nitrogen. Regulates intracellular CTP levels through interactions with the four ribonucleotide triphosphates. This chain is CTP synthase, found in Desulfovibrio desulfuricans (strain ATCC 27774 / DSM 6949 / MB).